The primary structure comprises 234 residues: Thymidine kinase, cytosolic (234 aa).

Position 13 is a phosphoserine (Ser13). ATP contacts are provided by residues 26–33 (GPMFSGKS), 58–60 (DTR), and 97–100 (DEGQ). Glu98 acts as the Proton acceptor in catalysis. Residue Phe128 participates in substrate binding. Residues Cys153 and Cys156 each coordinate Zn(2+). Substrate is bound by residues 172–176 (VEVIG) and Tyr181. The Zn(2+) site is built by Cys185 and Cys188. Positions 203–205 (KEN) match the KEN box motif.

Belongs to the thymidine kinase family. In terms of assembly, homotetramer. Tetramerization from dimerization is induced by ATP and increases catalytic efficiency due to a high affinity for thymidine. Tetramerization is inhibited by phosphorylation at Ser-13. Interacts (via the KEN box) with FZR1. Post-translationally, phosphorylated on Ser-13 in mitosis. Phosphorylation of Ser-13 by CDK1 during mitosis reduces homotetramerization and catalytic efficiency when DNA replication is complete and intracellular TK1 is still present at a high level. Polyubiquitinated. Postmitosis, ubiquitination leads to proteasomal degradation. The KEN box sequence located at the C-terminal region targets for degradation by the anaphase promoting complex (APC/C) activated and rate-limited by FZR1.

Its subcellular location is the cytoplasm. It catalyses the reaction thymidine + ATP = dTMP + ADP + H(+). In terms of biological role, cell-cycle-regulated enzyme of importance in nucleotide metabolism. Catalyzes the first enzymatic step in the salvage pathway converting thymidine into thymidine monophosphate. Transcriptional regulation limits expression to the S phase of the cell cycle and transient expression coincides with the oscillation in the intracellular dTTP concentration. The sequence is that of Thymidine kinase, cytosolic (TK1) from Cricetulus griseus (Chinese hamster).